Here is a 173-residue protein sequence, read N- to C-terminus: PTS system glucose-specific EIIA component (173 aa).

A PTS EIIA type-1 domain is found at 40–144 (DPTFAQKMMG…STVTPVVVTN (105 aa)). Residues H77 and H92 each contribute to the Zn(2+) site. H92 serves as the catalytic Tele-phosphohistidine intermediate; for EIIA activity. At H92 the chain carries Phosphohistidine; by HPr.

As to quaternary structure, heterodimer with glycerol kinase (glpk). It depends on Zn(2+) as a cofactor.

It localises to the cytoplasm. In terms of biological role, the phosphoenolpyruvate-dependent sugar phosphotransferase system (sugar PTS), a major carbohydrate active transport system, catalyzes the phosphorylation of incoming sugar substrates concomitantly with their translocation across the cell membrane. The enzyme II complex composed of PtsG and Crr is involved in glucose transport. The sequence is that of PTS system glucose-specific EIIA component (crr) from Halalkalibacterium halodurans (strain ATCC BAA-125 / DSM 18197 / FERM 7344 / JCM 9153 / C-125) (Bacillus halodurans).